The primary structure comprises 492 residues: Auxin transporter-like protein 1 (492 aa).

At 1–67 the chain is on the cytoplasmic side; it reads MVPREQAEEA…DAWFSCASNQ (67 aa). Residues 68–85 form a helical membrane-spanning segment; it reads VAQVLLTLPYSFSQLGML. Topologically, residues 86–87 are extracellular; that stretch reads SG. A helical membrane pass occupies residues 88–108; that stretch reads VLLQLFYGFMGSWTAYLISVL. The Cytoplasmic segment spans residues 109-143; the sequence is YVEYRSRKEKEGVSFKNHVIQWFEVLDGLLGPYWK. Residues 144 to 164 traverse the membrane as a helical segment; that stretch reads AAGLAFNCTFLLFGSVIQLIA. Residues 165 to 180 lie on the Extracellular side of the membrane; it reads CASNIYYINDRLDKRT. The chain crosses the membrane as a helical span at residues 181-201; that stretch reads WTYIFGACCATTVFIPSFHNY. Residue R202 is a topological domain, cytoplasmic. A helical membrane pass occupies residues 203–223; that stretch reads IWSFLGLGMTTYTAWYLAIAA. Residues 224-240 are Extracellular-facing; the sequence is LLNGQAEGITHTGPTKL. A helical transmembrane segment spans residues 241-261; the sequence is VLYFTGATNILYTFGGHAVTV. The Cytoplasmic segment spans residues 262–274; sequence EIMHAMWKPAKFK. A helical membrane pass occupies residues 275-295; it reads YIYLLATLYVFTLTLPSASAM. The Extracellular portion of the chain corresponds to 296–322; the sequence is YWAFGDELLTHSNAFSLLPKTGWRDAA. Residues 323–343 traverse the membrane as a helical segment; sequence VILMLIHQFITFGFACTPLYF. Residues 344–364 lie on the Cytoplasmic side of the membrane; that stretch reads VWEKVIGMHDTKSICLRALAR. A helical membrane pass occupies residues 365-385; that stretch reads LPIVVPIWFLAIIFPFFGPIN. A topological domain (extracellular) is located at residue S386. The helical transmembrane segment at 387–407 threads the bilayer; it reads AVGALLVSFTVYIIPALAHIL. Residues 408-432 lie on the Cytoplasmic side of the membrane; the sequence is TYRTASARMNAAEKPPFFLPSWTGM. A helical membrane pass occupies residues 433-453; sequence FVLNMFIVVWVLVVGFGLGGW. Over 454-492 the chain is Extracellular; that stretch reads ASMVNFIRQIDTFGLFAKCYQCPKPAPALAQSPVPLPHH.

Belongs to the amino acid/polyamine transporter 2 family. Amino acid/auxin permease (AAAP) (TC 2.A.18.1) subfamily.

Its subcellular location is the cell membrane. Carrier protein involved in proton-driven auxin influx. May mediate the formation of auxin gradient from developing leaves (site of auxin biosynthesis) to tips. The polypeptide is Auxin transporter-like protein 1 (Oryza sativa subsp. japonica (Rice)).